The chain runs to 1098 residues: NACHT, LRR and PYD domains-containing protein 5 (1098 aa).

Residues 1 to 97 form the Pyrin domain; the sequence is MREAKIAPLS…SEMARDEMKK (97 aa). The segment at 104 to 131 is disordered; the sequence is SEDSAPTKTDQGPSMKEVPGPREDPQDS. Residues 122 to 131 show a composition bias toward basic and acidic residues; that stretch reads PGPREDPQDS. In terms of domain architecture, NACHT spans 180 to 503; the sequence is LTVVLHGPPG…ALFYVLRGVE (324 aa). 186-193 serves as a coordination point for ATP; the sequence is GPPGVGKS. LRR repeat units lie at residues 851 to 871, 880 to 900, 908 to 928, 937 to 958, 965 to 985, 993 to 1013, and 1021 to 1041; these read GLTHLSLSGDELGSKGMSLLC, GLQKLALNACSLDVAGCGFLA, HLTHLSLSMNPLEDPGMNLLC, PLRDLDLVNCRLTASCCKSLSN, RLRSLDLAANALGDEGIAALC, TLTRLGLEACGLTSEGCKALS, and HLASLNLMRNDLGPRGMTTLC.

The protein belongs to the NLRP family. Component of the subcortical maternal complex (SCMC), at least composed of NLRP5, KHDC3, OOEP, and TLE6. Within the complex, interacts with OOEP, KHDC3 and TLE6. The SCMC may facilitate translocation of its components between the nuclear and cytoplasmic compartments. As part of the SCMC interacts with the SCMC-associated protein ZBED3. As part of the SCMC interacts with the SCMC-associated protein CFL1/Cofilin-1. Interacts with PRKCE. Interacts with TUBB3 at cytoskeleton microtubules. Phosphorylated by PRKCE. Oocyte-specific.

The protein localises to the cytoplasm. It is found in the cytoplasmic vesicle. Its subcellular location is the secretory vesicle. It localises to the cortical granule. The protein resides in the mitochondrion. The protein localises to the nucleus. It is found in the nucleolus. Its subcellular location is the golgi apparatus. Component of the subcortical maternal complex (SCMC), a multiprotein complex that plays a key role in early embryonic development. The SCMC complex is a structural constituent of cytoplasmic lattices, which consist in fibrous structures found in the cytoplasm of oocytes and preimplantation embryos. They are required to store maternal proteins critical for embryonic development, such as proteins that control epigenetic reprogramming of the preimplantation embryo, and prevent their degradation or activation. Required for the localization of cortical granules to the cortex of oocytes, via association with the cortical actin scaffold. Required for cortical actin clearance prior to oocyte exocytosis and prevention of polyspermy. Involved in regulating post-fertilization Ca(2+) release and endoplasmic reticulum storage (ER) storage via regulation of cellular localization. May be involved in the localization of mitochondria to the cytoplasm and perinuclear region in oocytes and early stage embryos, independent of its role in CPL formation. This is NACHT, LRR and PYD domains-containing protein 5 (NLRP5) from Bos taurus (Bovine).